A 129-amino-acid polypeptide reads, in one-letter code: MKNFHVVLEAAWLVRDVKTADDAIGVAISEAGKRLNPKLDFVEVDVGSTSCPACGEPFSSVFIAANTALVGLIFEMKVFDAESAEHAERIAKSVIGKSLRDIPLTVVEVTEFERSGEKGDQQQKGKAKK.

The protein belongs to the UPF0212 family.

This Methanosarcina acetivorans (strain ATCC 35395 / DSM 2834 / JCM 12185 / C2A) protein is UPF0212 protein MA_1372.